We begin with the raw amino-acid sequence, 284 residues long: Aquaporin NIP1-1 (284 aa).

Over residues 1 to 12 (MAGGDNNSQTTN) the composition is skewed to polar residues. Residues 1–28 (MAGGDNNSQTTNGGSGHEQRAMEEGRKQ) form a disordered region. Residues 17 to 28 (HEQRAMEEGRKQ) are compositionally biased toward basic and acidic residues. 2 helical membrane passes run 50 to 70 (IIAE…AVTI) and 78 to 98 (ITFP…VYAV). Positions 107–109 (NPA) match the NPA 1 motif. Transmembrane regions (helical) follow at residues 129–149 (AAAQ…MFGG), 166–186 (SLVL…GVAT), and 194–214 (LAGL…GPIS). An NPA 2 motif is present at residues 219-221 (NPA). The helical transmembrane segment at 236–256 (IWVYIVGPVAGAVAGAWAYNI) threads the bilayer.

This sequence belongs to the MIP/aquaporin (TC 1.A.8) family. NIP (TC 1.A.8.12) subfamily. As to expression, expressed in leaves and at lower levels in roots and anthers.

It is found in the membrane. Its function is as follows. Aquaporins facilitate the transport of water and small neutral solutes across cell membranes. This Oryza sativa subsp. japonica (Rice) protein is Aquaporin NIP1-1 (NIP1-1).